The primary structure comprises 623 residues: DNA mismatch repair protein MutL (623 aa).

The span at 353-368 shows a compositional bias: polar residues; it reads AQQSAPRPANSYSPAS. Residues 353 to 389 are disordered; sequence AQQSAPRPANSYSPASWRTAPPAPRSEWSPQTAHPAH.

It belongs to the DNA mismatch repair MutL/HexB family.

Its function is as follows. This protein is involved in the repair of mismatches in DNA. It is required for dam-dependent methyl-directed DNA mismatch repair. May act as a 'molecular matchmaker', a protein that promotes the formation of a stable complex between two or more DNA-binding proteins in an ATP-dependent manner without itself being part of a final effector complex. The protein is DNA mismatch repair protein MutL of Brucella melitensis biotype 1 (strain ATCC 23456 / CCUG 17765 / NCTC 10094 / 16M).